The sequence spans 206 residues: MELNVKTLEGKDAGKVSLSDAIFGLEPREDIIARVIRWQLAKKRQGTHKAQGRAEVSRTGAKMYKQKGTGRARHHSARAPQFRGGGKAHGPVVRSHEHDLPKKVRALGLRLALSAKLKAEDVIILDNLVAADAKTKALAGAFETLGLTNALFIGGAELDSNFKLAAANIPNIDVLPVQGINVYDILRRGKLVLSKAAVEALEERFK.

The tract at residues 63 to 97 (MYKQKGTGRARHHSARAPQFRGGGKAHGPVVRSHE) is disordered. Basic residues predominate over residues 64 to 77 (YKQKGTGRARHHSA).

Belongs to the universal ribosomal protein uL4 family. In terms of assembly, part of the 50S ribosomal subunit.

Functionally, one of the primary rRNA binding proteins, this protein initially binds near the 5'-end of the 23S rRNA. It is important during the early stages of 50S assembly. It makes multiple contacts with different domains of the 23S rRNA in the assembled 50S subunit and ribosome. Its function is as follows. Forms part of the polypeptide exit tunnel. In Rhizobium rhizogenes (strain K84 / ATCC BAA-868) (Agrobacterium radiobacter), this protein is Large ribosomal subunit protein uL4.